The sequence spans 360 residues: Putative transport protein BU123 (360 aa).

9 consecutive transmembrane segments (helical) span residues 18–38 (IFIV…ILGF), 39–59 (FWAS…QKIL), 66–86 (AVII…FFLV), 161–181 (GLFI…YWNG), 204–224 (LLLA…TALI), 230–250 (GIGL…IIFF), 251–271 (SCLI…WLYW), 280–300 (ILLI…PFFI), and 316–336 (IGGL…VLVI).

The protein belongs to the autoinducer-2 exporter (AI-2E) (TC 2.A.86) family.

The protein localises to the cell membrane. The chain is Putative transport protein BU123 from Buchnera aphidicola subsp. Acyrthosiphon pisum (strain APS) (Acyrthosiphon pisum symbiotic bacterium).